An 826-amino-acid polypeptide reads, in one-letter code: Golgin subfamily A member 6-like protein 25 (826 aa).

Disordered stretches follow at residues 1-100 (MWPQ…HQEA), 297-327 (QEQE…MRRQ), 345-425 (MHEQ…EMWR), 502-534 (QEEM…MWRQ), 547-646 (RQEE…EQEE), and 658-826 (QEEM…MQEH). Residues 31-52 (MSKETRQSKLAEAKEQLTDHHP) are compositionally biased toward basic and acidic residues. 2 stretches are compositionally biased toward polar residues: residues 53–63 (QTNPSVGTAAS) and 71–83 (NNGT…TSGG). Over residues 86-100 (SPEDEQKASHQHQEA) the composition is skewed to basic and acidic residues. A coiled-coil region spans residues 157 to 822 (LEQALSAVAT…EVRLRQQEEK (666 aa)). 2 stretches are compositionally biased toward basic and acidic residues: residues 658-678 (QEEM…KMWE) and 686-826 (QEEK…MQEH).

This sequence belongs to the GOLGA6 family.

In Homo sapiens (Human), this protein is Golgin subfamily A member 6-like protein 25.